The sequence spans 396 residues: ATP-dependent RNA helicase eIF4A (396 aa).

Residues 23 to 51 carry the Q motif motif; sequence DSFDEMNLKSELLRGIYAYGFERPSAIQQ. The region spanning 54–224 is the Helicase ATP-binding domain; sequence IMPVIKGHDV…TKFMRDPVRI (171 aa). Residue 67–74 coordinates ATP; sequence AQSGTGKT. Positions 172–175 match the DEAD box motif; it reads DEAD. The Helicase C-terminal domain maps to 235–396; the sequence is GIKQFYIAVE…EMPMNVADLI (162 aa).

This sequence belongs to the DEAD box helicase family. eIF4A subfamily. Component of the eIF4F complex, which composition varies with external and internal environmental conditions. It is composed of at least eIF4A, eIF4E and eIF4G.

It is found in the cytoplasm. The catalysed reaction is ATP + H2O = ADP + phosphate + H(+). In terms of biological role, ATP-dependent RNA helicase which is a subunit of the eIF4F complex involved in cap recognition and is required for mRNA binding to ribosome. In the current model of translation initiation, eIF4A unwinds RNA secondary structures in the 5'-UTR of mRNAs which is necessary to allow efficient binding of the small ribosomal subunit, and subsequent scanning for the initiator codon. This is ATP-dependent RNA helicase eIF4A (TIF1) from Pyricularia oryzae (strain 70-15 / ATCC MYA-4617 / FGSC 8958) (Rice blast fungus).